The primary structure comprises 292 residues: Probable 2-(5''-triphosphoribosyl)-3'-dephosphocoenzyme-A synthase (292 aa).

Belongs to the CitG/MdcB family.

It catalyses the reaction 3'-dephospho-CoA + ATP = 2'-(5''-triphospho-alpha-D-ribosyl)-3'-dephospho-CoA + adenine. Functionally, involved in the formation of 2-(5''-phosphoribosyl)-3'-dephosphocoenzyme-A, the prosthetic group of the acyl-carrier protein of the malonate decarboxylase. This Azotobacter vinelandii (strain DJ / ATCC BAA-1303) protein is Probable 2-(5''-triphosphoribosyl)-3'-dephosphocoenzyme-A synthase.